A 137-amino-acid polypeptide reads, in one-letter code: Large ribosomal subunit protein uL16c (137 aa).

A disordered region spans residues 1–21 (MLSPKKTKYRKQHRGRMKGKA).

Belongs to the universal ribosomal protein uL16 family. Part of the 50S ribosomal subunit.

It is found in the plastid. Its subcellular location is the chloroplast. In Oedogonium cardiacum (Filamentous green alga), this protein is Large ribosomal subunit protein uL16c.